The chain runs to 244 residues: Glutathione-independent glyoxalase hsp3101 (244 aa).

Active-site residues include C139, H140, and E173.

It belongs to the peptidase C56 family. HSP31-like subfamily.

The protein resides in the cytoplasm. The protein localises to the nucleus. The catalysed reaction is methylglyoxal + H2O = (R)-lactate + H(+). Functionally, catalyzes the conversion of methylglyoxal (MG) to D-lactate in a single glutathione (GSH)-independent step. May play a role in detoxifying endogenously produced glyoxals. Involved in protection against reactive oxygen species (ROS). This Schizosaccharomyces pombe (strain 972 / ATCC 24843) (Fission yeast) protein is Glutathione-independent glyoxalase hsp3101.